Reading from the N-terminus, the 367-residue chain is 2-aminoethylphosphonate--pyruvate transaminase (367 aa).

Pyridoxal 5'-phosphate-binding positions include 65 to 67, Tyr-92, Thr-143, and Asp-168; that span reads SGS. Position 194 is an N6-(pyridoxal phosphate)lysine (Lys-194). Residue Thr-243 coordinates pyridoxal 5'-phosphate.

This sequence belongs to the class-V pyridoxal-phosphate-dependent aminotransferase family. PhnW subfamily. Homodimer. The cofactor is pyridoxal 5'-phosphate.

The enzyme catalyses (2-aminoethyl)phosphonate + pyruvate = phosphonoacetaldehyde + L-alanine. Functionally, involved in phosphonate degradation. This chain is 2-aminoethylphosphonate--pyruvate transaminase (phnW), found in Salmonella typhimurium (strain LT2 / SGSC1412 / ATCC 700720).